We begin with the raw amino-acid sequence, 387 residues long: Chorismate synthase (387 aa).

Residues arginine 39 and arginine 45 each contribute to the NADP(+) site. The disordered stretch occupies residues 92-113 (PVEEGSEEKRRVSRPRPGHADL). FMN-binding positions include 130–132 (RSS), 250–251 (QA), glycine 295, 310–314 (KPIPT), and arginine 336.

Belongs to the chorismate synthase family. As to quaternary structure, homotetramer. FMNH2 serves as cofactor.

The enzyme catalyses 5-O-(1-carboxyvinyl)-3-phosphoshikimate = chorismate + phosphate. It functions in the pathway metabolic intermediate biosynthesis; chorismate biosynthesis; chorismate from D-erythrose 4-phosphate and phosphoenolpyruvate: step 7/7. Catalyzes the anti-1,4-elimination of the C-3 phosphate and the C-6 proR hydrogen from 5-enolpyruvylshikimate-3-phosphate (EPSP) to yield chorismate, which is the branch point compound that serves as the starting substrate for the three terminal pathways of aromatic amino acid biosynthesis. This reaction introduces a second double bond into the aromatic ring system. The sequence is that of Chorismate synthase from Brevibacillus brevis (strain 47 / JCM 6285 / NBRC 100599).